We begin with the raw amino-acid sequence, 257 residues long: G2/mitotic-specific cyclin S13-7 (257 aa).

It belongs to the cyclin family. Cyclin AB subfamily. As to quaternary structure, interacts with the CDC2 protein kinase to form a serine/threonine kinase holoenzyme complex also known as maturation promoting factor (MPF). The cyclin subunit imparts substrate specificity to the complex.

Functionally, essential for the control of the cell cycle at the G2/M (mitosis) transition. The chain is G2/mitotic-specific cyclin S13-7 from Glycine max (Soybean).